A 340-amino-acid chain; its full sequence is ATP synthase subunit a (340 aa).

A signal peptide spans 1–32 (MKRVNVIQAKAFLKVIALLVPLLLNANGPAFA). The next 6 helical transmembrane spans lie at 107 to 127 (HVVM…LVGS), 172 to 192 (LLTV…PYGA), 197 to 217 (NINV…VAAL), 236 to 256 (ALWI…PVAL), 269 to 289 (IVIL…VAVV), and 296 to 316 (IFIY…FTML).

The protein belongs to the ATPase A chain family. F-type ATPases have 2 components, CF(1) - the catalytic core - and CF(0) - the membrane proton channel. CF(1) has five subunits: alpha(3), beta(3), gamma(1), delta(1), epsilon(1). CF(0) has four main subunits: a, b, b' and c.

Its subcellular location is the cell inner membrane. In terms of biological role, key component of the proton channel; it plays a direct role in the translocation of protons across the membrane. This is ATP synthase subunit a from Pelodictyon phaeoclathratiforme (strain DSM 5477 / BU-1).